We begin with the raw amino-acid sequence, 293 residues long: 3-methyl-2-oxobutanoate hydroxymethyltransferase (293 aa).

The tract at residues 1-25 (MTDSPTAGTPYGTLPPASPLPQRRP) is disordered. Positions 67 and 110 each coordinate Mg(2+). 3-methyl-2-oxobutanoate is bound by residues 67–68 (DS), aspartate 110, and lysine 139. Glutamate 141 provides a ligand contact to Mg(2+). Glutamate 208 functions as the Proton acceptor in the catalytic mechanism.

This sequence belongs to the PanB family. Homodecamer; pentamer of dimers. Mg(2+) serves as cofactor.

It localises to the cytoplasm. It catalyses the reaction 3-methyl-2-oxobutanoate + (6R)-5,10-methylene-5,6,7,8-tetrahydrofolate + H2O = 2-dehydropantoate + (6S)-5,6,7,8-tetrahydrofolate. The protein operates within cofactor biosynthesis; (R)-pantothenate biosynthesis; (R)-pantoate from 3-methyl-2-oxobutanoate: step 1/2. Its function is as follows. Catalyzes the reversible reaction in which hydroxymethyl group from 5,10-methylenetetrahydrofolate is transferred onto alpha-ketoisovalerate to form ketopantoate. The chain is 3-methyl-2-oxobutanoate hydroxymethyltransferase from Acidovorax sp. (strain JS42).